A 465-amino-acid chain; its full sequence is Putative F-box/FBD/LRR-repeat protein At1g22000 (465 aa).

In terms of domain architecture, F-box spans 28 to 74; it reads ETRICALPDDLLLQILPHVPTKEAVATSILSKQWRYVWLMLPKLEFK. 5 LRR repeats span residues 154 to 181, 182 to 207, 210 to 230, 248 to 273, and 339 to 365; these read CLTL…SLHY, VVYK…SVHS, DDNL…NYDE, NEVE…HLSE, and ISLV…TIDN. The FBD domain maps to 373–424; the sequence is SWNQPSSIPGCLLSHLETFRWRGYGGREDAKKLLMTYILANSKCLKTVEISL.

The polypeptide is Putative F-box/FBD/LRR-repeat protein At1g22000 (Arabidopsis thaliana (Mouse-ear cress)).